A 1114-amino-acid polypeptide reads, in one-letter code: Isoleucine--tRNA ligase (1114 aa).

A 'HIGH' region motif is present at residues 61–71 (PTANGQPGTHH). Residues 640 to 644 (KMSKH) carry the 'KMSKS' region motif. Residue Lys-643 participates in ATP binding.

The protein belongs to the class-I aminoacyl-tRNA synthetase family. IleS type 2 subfamily. Monomer. Requires Zn(2+) as cofactor.

It is found in the cytoplasm. The catalysed reaction is tRNA(Ile) + L-isoleucine + ATP = L-isoleucyl-tRNA(Ile) + AMP + diphosphate. Functionally, catalyzes the attachment of isoleucine to tRNA(Ile). As IleRS can inadvertently accommodate and process structurally similar amino acids such as valine, to avoid such errors it has two additional distinct tRNA(Ile)-dependent editing activities. One activity is designated as 'pretransfer' editing and involves the hydrolysis of activated Val-AMP. The other activity is designated 'posttransfer' editing and involves deacylation of mischarged Val-tRNA(Ile). The chain is Isoleucine--tRNA ligase from Cutibacterium acnes (strain DSM 16379 / KPA171202) (Propionibacterium acnes).